The following is a 232-amino-acid chain: Probable phospholipid hydroperoxide glutathione peroxidase 6, mitochondrial (232 aa).

A mitochondrion-targeting transit peptide spans 1-54 (MLRSSIRLLYIRRTSPLLRSLSSSSSSSSSKRFDSAKPLFNSHRIISLPISTTG). Residue Cys105 is part of the active site.

The protein belongs to the glutathione peroxidase family. Expressed at a low but detectable level in leaves, stems, and flowers, but at a higher level in siliques and even higher in roots. Predominantly expressed in seeds.

The protein resides in the mitochondrion. It catalyses the reaction a hydroperoxy polyunsaturated fatty acid + 2 glutathione = a hydroxy polyunsaturated fatty acid + glutathione disulfide + H2O. In terms of biological role, protects cells and enzymes from oxidative damage, by catalyzing the reduction of hydrogen peroxide, lipid peroxides and organic hydroperoxide, by glutathione. In Arabidopsis thaliana (Mouse-ear cress), this protein is Probable phospholipid hydroperoxide glutathione peroxidase 6, mitochondrial (GPX6).